Reading from the N-terminus, the 685-residue chain is Methionine--tRNA ligase (685 aa).

Residues 12 to 22 carry the 'HIGH' region motif; that stretch reads PYANGSIHLGH. Zn(2+)-binding residues include Cys-143, Cys-146, Cys-156, and Cys-159. Positions 339-343 match the 'KMSKS' region motif; that stretch reads KMSKS. Residue Lys-342 participates in ATP binding. A tRNA-binding domain is found at 582–685; that stretch reads DFMKIDMRVA…AGAQPGDKVG (104 aa).

Belongs to the class-I aminoacyl-tRNA synthetase family. MetG type 1 subfamily. Homodimer. It depends on Zn(2+) as a cofactor.

The protein resides in the cytoplasm. The enzyme catalyses tRNA(Met) + L-methionine + ATP = L-methionyl-tRNA(Met) + AMP + diphosphate. Is required not only for elongation of protein synthesis but also for the initiation of all mRNA translation through initiator tRNA(fMet) aminoacylation. The sequence is that of Methionine--tRNA ligase from Neisseria meningitidis serogroup C (strain 053442).